Here is an 841-residue protein sequence, read N- to C-terminus: Translation initiation factor IF-2 (841 aa).

Composition is skewed to basic and acidic residues over residues Met1–Lys12, Ala52–Lys92, Glu114–Ala170, Arg188–Arg202, and Lys213–Gly235. 2 disordered regions span residues Met1–Val24 and Ala52–Leu246. The 171-residue stretch at Thr340–Thr510 folds into the tr-type G domain. The G1 stretch occupies residues Gly349–Thr356. Gly349–Thr356 contributes to the GTP binding site. Residues Gly374 to His378 are G2. The interval Asp396 to Gly399 is G3. GTP-binding positions include Asp396–His400 and Asn450–Asp453. A G4 region spans residues Asn450–Asp453. The segment at Ser486–Lys488 is G5.

Belongs to the TRAFAC class translation factor GTPase superfamily. Classic translation factor GTPase family. IF-2 subfamily.

It is found in the cytoplasm. One of the essential components for the initiation of protein synthesis. Protects formylmethionyl-tRNA from spontaneous hydrolysis and promotes its binding to the 30S ribosomal subunits. Also involved in the hydrolysis of GTP during the formation of the 70S ribosomal complex. The polypeptide is Translation initiation factor IF-2 (Actinobacillus pleuropneumoniae serotype 5b (strain L20)).